Consider the following 227-residue polypeptide: Lipoprotein-releasing system ATP-binding protein LolD (227 aa).

In terms of domain architecture, ABC transporter spans 7 to 227; the sequence is LQLTGVERHY…TISDGKIVDF (221 aa). 43 to 50 provides a ligand contact to ATP; the sequence is APSGTGKS.

It belongs to the ABC transporter superfamily. Lipoprotein translocase (TC 3.A.1.125) family. As to quaternary structure, the complex is composed of two ATP-binding proteins (LolD) and two transmembrane proteins (LolC and LolE).

It localises to the cell inner membrane. Part of the ABC transporter complex LolCDE involved in the translocation of mature outer membrane-directed lipoproteins, from the inner membrane to the periplasmic chaperone, LolA. Responsible for the formation of the LolA-lipoprotein complex in an ATP-dependent manner. The sequence is that of Lipoprotein-releasing system ATP-binding protein LolD from Rhizobium johnstonii (strain DSM 114642 / LMG 32736 / 3841) (Rhizobium leguminosarum bv. viciae).